Here is a 1067-residue protein sequence, read N- to C-terminus: Carbamoyl phosphate synthase large chain (1067 aa).

Residues 1 to 401 are carboxyphosphate synthetic domain; it reads MPLNKDIKKV…AFLKGIRSLE (401 aa). ATP is bound by residues Arg-129, Arg-169, Gly-175, Gly-176, Lys-208, Val-210, Glu-215, Gly-241, Ile-242, His-243, Gln-284, and Glu-298. In terms of domain architecture, ATP-grasp 1 spans 133-327; sequence RDMMNRINQP…IAKVAAKIAL (195 aa). Mg(2+)-binding residues include Gln-284, Glu-298, and Asn-300. Residues Gln-284, Glu-298, and Asn-300 each coordinate Mn(2+). The tract at residues 402–549 is oligomerization domain; it reads IGKYSLEHKK…YSTYEQYDEV (148 aa). A carbamoyl phosphate synthetic domain region spans residues 550 to 932; sequence VVSDNKKVVV…ALYKGFVGAS (383 aa). An ATP-grasp 2 domain is found at 674–864; it reads DDLLERLNIA…IVDIATRIML (191 aa). The ATP site is built by Arg-710, Lys-749, Leu-751, Glu-755, Gly-780, Val-781, His-782, Ser-783, Gln-823, and Glu-835. The Mg(2+) site is built by Gln-823, Glu-835, and Asn-837. Mn(2+) contacts are provided by Gln-823, Glu-835, and Asn-837. The MGS-like domain occupies 933–1067; sequence MYTGDKGKTI…NRELEVFNLI (135 aa). The interval 933-1067 is allosteric domain; that stretch reads MYTGDKGKTI…NRELEVFNLI (135 aa).

Belongs to the CarB family. In terms of assembly, composed of two chains; the small (or glutamine) chain promotes the hydrolysis of glutamine to ammonia, which is used by the large (or ammonia) chain to synthesize carbamoyl phosphate. Tetramer of heterodimers (alpha,beta)4. The cofactor is Mg(2+). Mn(2+) is required as a cofactor.

It catalyses the reaction hydrogencarbonate + L-glutamine + 2 ATP + H2O = carbamoyl phosphate + L-glutamate + 2 ADP + phosphate + 2 H(+). The catalysed reaction is hydrogencarbonate + NH4(+) + 2 ATP = carbamoyl phosphate + 2 ADP + phosphate + 2 H(+). It functions in the pathway amino-acid biosynthesis; L-arginine biosynthesis; carbamoyl phosphate from bicarbonate: step 1/1. Its pathway is pyrimidine metabolism; UMP biosynthesis via de novo pathway; (S)-dihydroorotate from bicarbonate: step 1/3. Its function is as follows. Large subunit of the glutamine-dependent carbamoyl phosphate synthetase (CPSase). CPSase catalyzes the formation of carbamoyl phosphate from the ammonia moiety of glutamine, carbonate, and phosphate donated by ATP, constituting the first step of 2 biosynthetic pathways, one leading to arginine and/or urea and the other to pyrimidine nucleotides. The large subunit (synthetase) binds the substrates ammonia (free or transferred from glutamine from the small subunit), hydrogencarbonate and ATP and carries out an ATP-coupled ligase reaction, activating hydrogencarbonate by forming carboxy phosphate which reacts with ammonia to form carbamoyl phosphate. This is Carbamoyl phosphate synthase large chain from Clostridium perfringens (strain SM101 / Type A).